A 164-amino-acid polypeptide reads, in one-letter code: ATP synthase subunit b (164 aa).

A helical transmembrane segment spans residues 6 to 26 (GELVGNFILVTGSVIVLLLLI).

Belongs to the ATPase B chain family. In terms of assembly, F-type ATPases have 2 components, F(1) - the catalytic core - and F(0) - the membrane proton channel. F(1) has five subunits: alpha(3), beta(3), gamma(1), delta(1), epsilon(1). F(0) has three main subunits: a(1), b(2) and c(10-14). The alpha and beta chains form an alternating ring which encloses part of the gamma chain. F(1) is attached to F(0) by a central stalk formed by the gamma and epsilon chains, while a peripheral stalk is formed by the delta and b chains.

It is found in the cell membrane. In terms of biological role, f(1)F(0) ATP synthase produces ATP from ADP in the presence of a proton or sodium gradient. F-type ATPases consist of two structural domains, F(1) containing the extramembraneous catalytic core and F(0) containing the membrane proton channel, linked together by a central stalk and a peripheral stalk. During catalysis, ATP synthesis in the catalytic domain of F(1) is coupled via a rotary mechanism of the central stalk subunits to proton translocation. Component of the F(0) channel, it forms part of the peripheral stalk, linking F(1) to F(0). The polypeptide is ATP synthase subunit b (Streptococcus pyogenes serotype M1).